The primary structure comprises 70 residues: Large ribosomal subunit protein eL43 (70 aa).

Residues cysteine 36, cysteine 39, cysteine 55, and cysteine 58 each contribute to the Zn(2+) site. A C4-type zinc finger spans residues 36-58; sequence CPYCKTTGKVIRLASGIWYCKKC.

The protein belongs to the eukaryotic ribosomal protein eL43 family. Putative zinc-binding subfamily. In terms of assembly, part of the 50S ribosomal subunit. The cofactor is Zn(2+).

In terms of biological role, binds to the 23S rRNA. This is Large ribosomal subunit protein eL43 from Saccharolobus solfataricus (strain ATCC 35092 / DSM 1617 / JCM 11322 / P2) (Sulfolobus solfataricus).